The primary structure comprises 121 residues: Glycine cleavage system H protein (121 aa).

A Lipoyl-binding domain is found at 16–98 (VATIGITAHA…EAGGWFAKVR (83 aa)). Lysine 57 is modified (N6-lipoyllysine).

The protein belongs to the GcvH family. As to quaternary structure, the glycine cleavage system is composed of four proteins: P, T, L and H. (R)-lipoate is required as a cofactor.

The glycine cleavage system catalyzes the degradation of glycine. The H protein shuttles the methylamine group of glycine from the P protein to the T protein. The polypeptide is Glycine cleavage system H protein (Phenylobacterium zucineum (strain HLK1)).